The primary structure comprises 262 residues: Acyl-[acyl-carrier-protein]--UDP-N-acetylglucosamine O-acyltransferase (262 aa).

It belongs to the transferase hexapeptide repeat family. LpxA subfamily. Homotrimer.

The protein resides in the cytoplasm. The enzyme catalyses a (3R)-hydroxyacyl-[ACP] + UDP-N-acetyl-alpha-D-glucosamine = a UDP-3-O-[(3R)-3-hydroxyacyl]-N-acetyl-alpha-D-glucosamine + holo-[ACP]. The protein operates within glycolipid biosynthesis; lipid IV(A) biosynthesis; lipid IV(A) from (3R)-3-hydroxytetradecanoyl-[acyl-carrier-protein] and UDP-N-acetyl-alpha-D-glucosamine: step 1/6. Involved in the biosynthesis of lipid A, a phosphorylated glycolipid that anchors the lipopolysaccharide to the outer membrane of the cell. The sequence is that of Acyl-[acyl-carrier-protein]--UDP-N-acetylglucosamine O-acyltransferase from Janthinobacterium sp. (strain Marseille) (Minibacterium massiliensis).